The chain runs to 109 residues: Large ribosomal subunit protein bL19 (109 aa).

This sequence belongs to the bacterial ribosomal protein bL19 family.

Its function is as follows. This protein is located at the 30S-50S ribosomal subunit interface and may play a role in the structure and function of the aminoacyl-tRNA binding site. The protein is Large ribosomal subunit protein bL19 of Rubrobacter xylanophilus (strain DSM 9941 / JCM 11954 / NBRC 16129 / PRD-1).